The primary structure comprises 507 residues: Zinc finger CCCH-type with G patch domain-containing protein (507 aa).

Residue Met1 is modified to N-acetylmethionine. The tract at residues 88–125 is disordered; it reads PVDPGNDSKTVPGSEVQPTPTSSALEEEEEDPDLEDLS. Positions 94–111 are enriched in polar residues; the sequence is DSKTVPGSEVQPTPTSSA. The segment covering 112–123 has biased composition (acidic residues); the sequence is LEEEEEDPDLED. The C3H1-type zinc-finger motif lies at 170–196; that stretch reads KSLKPCPFFLEGKCRFKENCRFSHGQL. The segment at 264-283 is disordered; the sequence is LRTEATDSSDSDTGDASDSS. Position 272 is a phosphoserine (Ser272). Residue Thr276 is modified to Phosphothreonine. Residues 309–355 enclose the G-patch domain; it reads TRGIGSKLLVKMGYEFGKGLGRHAEGRVEPIHAVVLPRGKSLDQCAE. Phosphoserine is present on Ser349. Disordered regions lie at residues 359–389 and 486–507; these read KKTK…PPRN and AQEA…MTEF. Basic and acidic residues predominate over residues 487-507; that stretch reads QEADLQRKQRKADTHRKMTEF.

In terms of assembly, interacts with CHD4/Mi-2; the interaction is direct.

The protein localises to the nucleus. In terms of biological role, transcription repressor that specifically binds the 5'-GGAG[GA]A[GA]A-3' consensus sequence. Represses transcription by recruiting the chromatin multiprotein complex NuRD to target promoters. Negatively regulates expression of EGFR, a gene involved in cell proliferation, survival and migration. Its ability to repress genes of the EGFR pathway suggest it may act as a tumor suppressor. The chain is Zinc finger CCCH-type with G patch domain-containing protein (Zgpat) from Rattus norvegicus (Rat).